Consider the following 430-residue polypeptide: NEDD8-activating enzyme E1 catalytic subunit (430 aa).

52–76 (GLGCELLKNLALSGFRTIEVIDMDT) is a binding site for ATP. Cys211 serves as the catalytic Glycyl thioester intermediate.

This sequence belongs to the ubiquitin-activating E1 family. UBA3 subfamily. In terms of assembly, heterodimer of uba-3 and ula-1. Interacts with NEDD8 and ubc-12. Expressed in intestine, vulva epithelium and head and tail neurons.

The protein resides in the nucleus. It localises to the cytoplasm. The catalysed reaction is ATP + [NEDD8 protein] + [E1 NEDD8-activating enzyme]-L-cysteine = AMP + diphosphate + [E1 NEDD8-activating enzyme]-S-[NEDD8 protein]-yl-L-cysteine.. The protein operates within protein modification; protein neddylation. Functionally, catalytic subunit of the dimeric rfl-1 (uba-3)-ula-1 E1 enzyme. E1 activates NEDD8 by first adenylating its C-terminal glycine residue with ATP, thereafter linking this residue to the side chain of the catalytic cysteine, yielding a NEDD8-uba-3 thioester and free AMP. E1 finally transfers NEDD8 to the catalytic cysteine of ubc-12. Required for cytokinesis and mitotic spindle orientation during early embryogenesis. The protein is NEDD8-activating enzyme E1 catalytic subunit of Caenorhabditis elegans.